Reading from the N-terminus, the 199-residue chain is Protein PPP1R35 homolog (199 aa).

The span at 1–11 (MPHKRRNRVHA) shows a compositional bias: basic residues. Disordered regions lie at residues 1 to 23 (MPHK…RVSV) and 36 to 60 (ESCN…AMTN). Positions 38 to 49 (CNGSHADNSSPD) are enriched in polar residues.

It belongs to the PPP1R35 family. As to quaternary structure, interacts with Ana3; this complex is recruited to daughter centrioles before their conversion to centrosomes.

It is found in the cytoplasm. It localises to the cytoskeleton. Its subcellular location is the microtubule organizing center. The protein resides in the centrosome. The protein localises to the centriole. Functionally, participates in the later stages of centriole assembly through the interaction with Ana3 leading to the centriole to centrosome conversion in somatic cells. This chain is Protein PPP1R35 homolog, found in Drosophila melanogaster (Fruit fly).